A 361-amino-acid chain; its full sequence is dTDP-glucose 4,6-dehydratase (361 aa).

NAD(+) contacts are provided by residues Phe-11 to Ile-12, Asp-32 to Thr-35, Asp-58 to Ile-59, Leu-80 to Ser-84, and Thr-99. Ser-84 is a binding site for substrate. Residue Thr-133 coordinates substrate. The active-site Proton donor is the Asp-134. Catalysis depends on proton acceptor residues Glu-135 and Tyr-167. Position 167-171 (Tyr-167–Lys-171) interacts with NAD(+). Substrate is bound at residue Asn-196. Asn-197 contacts NAD(+). Substrate is bound by residues Lys-206–Leu-207, Pro-222–Tyr-224, Arg-231, Asn-266, Asp-296–His-300, and Tyr-357.

Belongs to the NAD(P)-dependent epimerase/dehydratase family. dTDP-glucose dehydratase subfamily. As to quaternary structure, homodimer. NAD(+) serves as cofactor.

It catalyses the reaction dTDP-alpha-D-glucose = dTDP-4-dehydro-6-deoxy-alpha-D-glucose + H2O. The protein operates within carbohydrate biosynthesis; dTDP-L-rhamnose biosynthesis. It participates in bacterial outer membrane biogenesis; LPS O-antigen biosynthesis. Catalyzes the dehydration of dTDP-D-glucose to form dTDP-6-deoxy-D-xylo-4-hexulose via a three-step process involving oxidation, dehydration and reduction. This Salmonella typhimurium (strain LT2 / SGSC1412 / ATCC 700720) protein is dTDP-glucose 4,6-dehydratase.